The following is a 238-amino-acid chain: Purine nucleoside phosphorylase DeoD-type (238 aa).

H4 is an a purine D-ribonucleoside binding site. Phosphate contacts are provided by residues G20, R24, R43, and 87–90 (RVGS). A purine D-ribonucleoside is bound by residues 179-181 (EME) and 203-204 (SD). The active-site Proton donor is the D204.

Belongs to the PNP/UDP phosphorylase family. In terms of assembly, homohexamer; trimer of homodimers.

The catalysed reaction is a purine D-ribonucleoside + phosphate = a purine nucleobase + alpha-D-ribose 1-phosphate. It catalyses the reaction a purine 2'-deoxy-D-ribonucleoside + phosphate = a purine nucleobase + 2-deoxy-alpha-D-ribose 1-phosphate. Its function is as follows. Catalyzes the reversible phosphorolytic breakdown of the N-glycosidic bond in the beta-(deoxy)ribonucleoside molecules, with the formation of the corresponding free purine bases and pentose-1-phosphate. The sequence is that of Purine nucleoside phosphorylase DeoD-type from Haemophilus influenzae (strain 86-028NP).